The following is a 229-amino-acid chain: MAKTLARSTASRITKRLISTSGATTPSPSYILSRRSTPVFSHAVGFISSLNRFTTIRTRMDRSGGSYSPLKSGSNFSDRAPTEMAPLFPGCDYEHWLIVMDKPGGENATKQQMIDCYVQTLAKIIGSEEEAKKKIYNVSCERYFGFGCEIDEETSNKLEGLPGVLFILPDSYVDQENKDYGAELFVNGEIVQRPPERQRKIIELTTQRTNDKPKYHDKTRYVRRRENMR.

A chloroplast and mitochondrion-targeting transit peptide spans 1-57 (MAKTLARSTASRITKRLISTSGATTPSPSYILSRRSTPVFSHAVGFISSLNRFTTIR).

The protein belongs to the MORF family. In terms of assembly, homodimer and heterodimers with MORF8/RIP1, MORF3/RIP3, MORF6/RIP6, MORF7/RIP7 and MORF9/RIP9.

Its subcellular location is the mitochondrion. It is found in the plastid. The protein resides in the chloroplast. Functionally, involved in organellar RNA editing. Required for the processing of few RNA editing sites in mitochondria. The polypeptide is Multiple organellar RNA editing factor 5, chloroplastic/mitochondrial (Arabidopsis thaliana (Mouse-ear cress)).